Here is a 292-residue protein sequence, read N- to C-terminus: UPF0696 protein C11orf68 homolog (292 aa).

Residues 1 to 10 (MAAAAAAVAG) show a composition bias toward low complexity. Residues 1-60 (MAAAAAAVAGAGRGGGGGADPGQERSRARSWVGAERSEGRRMEPNEELEEEDSPGGREDG) are disordered. Gly residues predominate over residues 11-20 (AGRGGGGGAD). A compositionally biased stretch (basic and acidic residues) spans 35–44 (ERSEGRRMEP).

Belongs to the UPF0696 family.

The polypeptide is UPF0696 protein C11orf68 homolog (Bles03) (Rattus norvegicus (Rat)).